A 96-amino-acid chain; its full sequence is Phosphoribosyl-ATP pyrophosphatase (96 aa).

It belongs to the PRA-PH family.

Its subcellular location is the cytoplasm. The enzyme catalyses 1-(5-phospho-beta-D-ribosyl)-ATP + H2O = 1-(5-phospho-beta-D-ribosyl)-5'-AMP + diphosphate + H(+). Its pathway is amino-acid biosynthesis; L-histidine biosynthesis; L-histidine from 5-phospho-alpha-D-ribose 1-diphosphate: step 2/9. The protein is Phosphoribosyl-ATP pyrophosphatase of Methanococcus aeolicus (strain ATCC BAA-1280 / DSM 17508 / OCM 812 / Nankai-3).